We begin with the raw amino-acid sequence, 80 residues long: Exodeoxyribonuclease 7 small subunit (80 aa).

The protein belongs to the XseB family. Heterooligomer composed of large and small subunits.

The protein resides in the cytoplasm. It carries out the reaction Exonucleolytic cleavage in either 5'- to 3'- or 3'- to 5'-direction to yield nucleoside 5'-phosphates.. Functionally, bidirectionally degrades single-stranded DNA into large acid-insoluble oligonucleotides, which are then degraded further into small acid-soluble oligonucleotides. In Rickettsia akari (strain Hartford), this protein is Exodeoxyribonuclease 7 small subunit.